We begin with the raw amino-acid sequence, 481 residues long: 3-isopropylmalate dehydratase large subunit (481 aa).

[4Fe-4S] cluster contacts are provided by Cys-357, Cys-417, and Cys-420.

The protein belongs to the aconitase/IPM isomerase family. LeuC type 1 subfamily. Heterodimer of LeuC and LeuD. It depends on [4Fe-4S] cluster as a cofactor.

The catalysed reaction is (2R,3S)-3-isopropylmalate = (2S)-2-isopropylmalate. Its pathway is amino-acid biosynthesis; L-leucine biosynthesis; L-leucine from 3-methyl-2-oxobutanoate: step 2/4. Its function is as follows. Catalyzes the isomerization between 2-isopropylmalate and 3-isopropylmalate, via the formation of 2-isopropylmaleate. The chain is 3-isopropylmalate dehydratase large subunit from Mycolicibacterium vanbaalenii (strain DSM 7251 / JCM 13017 / BCRC 16820 / KCTC 9966 / NRRL B-24157 / PYR-1) (Mycobacterium vanbaalenii).